The primary structure comprises 184 residues: Elongation factor P (184 aa).

Belongs to the elongation factor P family.

It localises to the cytoplasm. It functions in the pathway protein biosynthesis; polypeptide chain elongation. Functionally, involved in peptide bond synthesis. Stimulates efficient translation and peptide-bond synthesis on native or reconstituted 70S ribosomes in vitro. Probably functions indirectly by altering the affinity of the ribosome for aminoacyl-tRNA, thus increasing their reactivity as acceptors for peptidyl transferase. The protein is Elongation factor P of Albidiferax ferrireducens (strain ATCC BAA-621 / DSM 15236 / T118) (Rhodoferax ferrireducens).